The primary structure comprises 98 residues: NADH-ubiquinone oxidoreductase chain 4L (98 aa).

The next 3 membrane-spanning stretches (helical) occupy residues 2 to 22, 26 to 46, and 59 to 79; these read TSAF…TFMF, LMST…MTST, and IPIT…ALLV.

It belongs to the complex I subunit 4L family. As to quaternary structure, core subunit of respiratory chain NADH dehydrogenase (Complex I) which is composed of 45 different subunits.

The protein localises to the mitochondrion inner membrane. It carries out the reaction a ubiquinone + NADH + 5 H(+)(in) = a ubiquinol + NAD(+) + 4 H(+)(out). Its function is as follows. Core subunit of the mitochondrial membrane respiratory chain NADH dehydrogenase (Complex I) which catalyzes electron transfer from NADH through the respiratory chain, using ubiquinone as an electron acceptor. Part of the enzyme membrane arm which is embedded in the lipid bilayer and involved in proton translocation. The polypeptide is NADH-ubiquinone oxidoreductase chain 4L (Rattus norvegicus (Rat)).